Here is an 82-residue protein sequence, read N- to C-terminus: Photosystem I iron-sulfur center (82 aa).

4Fe-4S ferredoxin-type domains follow at residues alanine 2–tryptophan 31 and isoleucine 40–tyrosine 69. [4Fe-4S] cluster-binding residues include cysteine 11, cysteine 14, cysteine 17, cysteine 21, cysteine 49, cysteine 52, cysteine 55, and cysteine 59.

The cyanobacterial PSI reaction center is composed of one copy each of PsaA,B,C,D,E,F,I,J,K,L,M and X, and forms trimeric complexes. It depends on [4Fe-4S] cluster as a cofactor.

It localises to the cellular thylakoid membrane. The catalysed reaction is reduced [plastocyanin] + hnu + oxidized [2Fe-2S]-[ferredoxin] = oxidized [plastocyanin] + reduced [2Fe-2S]-[ferredoxin]. Functionally, apoprotein for the two 4Fe-4S centers FA and FB of photosystem I (PSI); essential for photochemical activity. FB is the terminal electron acceptor of PSI, donating electrons to ferredoxin. The C-terminus interacts with PsaA/B/D and helps assemble the protein into the PSI complex. Required for binding of PsaD and PsaE to PSI. PSI is a plastocyanin/cytochrome c6-ferredoxin oxidoreductase, converting photonic excitation into a charge separation, which transfers an electron from the donor P700 chlorophyll pair to the spectroscopically characterized acceptors A0, A1, FX, FA and FB in turn. This Synechococcus sp. (strain JA-3-3Ab) (Cyanobacteria bacterium Yellowstone A-Prime) protein is Photosystem I iron-sulfur center.